Reading from the N-terminus, the 465-residue chain is Argininosuccinate lyase (465 aa).

This sequence belongs to the lyase 1 family. Argininosuccinate lyase subfamily.

It localises to the cytoplasm. It catalyses the reaction 2-(N(omega)-L-arginino)succinate = fumarate + L-arginine. The protein operates within amino-acid biosynthesis; L-arginine biosynthesis; L-arginine from L-ornithine and carbamoyl phosphate: step 3/3. This is Argininosuccinate lyase from Aromatoleum aromaticum (strain DSM 19018 / LMG 30748 / EbN1) (Azoarcus sp. (strain EbN1)).